Reading from the N-terminus, the 351-residue chain is Phospho-N-acetylmuramoyl-pentapeptide-transferase (351 aa).

Helical transmembrane passes span 17 to 37 (TAYA…FIIS), 61 to 83 (MGIP…FFWI), 88 to 105 (IYFL…CLGF), 130 to 150 (ILFS…HVSI), 158 to 178 (SLKL…LISA), 190 to 210 (GLAI…AYLT), 230 to 250 (LVIF…FNAY), 254 to 274 (IMMG…VALI), 279 to 299 (ILFA…IIQV), and 328 to 348 (QVVI…LSTI).

The protein belongs to the glycosyltransferase 4 family. MraY subfamily. Mg(2+) serves as cofactor.

The protein resides in the cell inner membrane. It carries out the reaction UDP-N-acetyl-alpha-D-muramoyl-L-alanyl-gamma-D-glutamyl-meso-2,6-diaminopimeloyl-D-alanyl-D-alanine + di-trans,octa-cis-undecaprenyl phosphate = di-trans,octa-cis-undecaprenyl diphospho-N-acetyl-alpha-D-muramoyl-L-alanyl-D-glutamyl-meso-2,6-diaminopimeloyl-D-alanyl-D-alanine + UMP. The protein operates within cell wall biogenesis; peptidoglycan biosynthesis. Functionally, catalyzes the initial step of the lipid cycle reactions in the biosynthesis of the cell wall peptidoglycan: transfers peptidoglycan precursor phospho-MurNAc-pentapeptide from UDP-MurNAc-pentapeptide onto the lipid carrier undecaprenyl phosphate, yielding undecaprenyl-pyrophosphoryl-MurNAc-pentapeptide, known as lipid I. This Borrelia recurrentis (strain A1) protein is Phospho-N-acetylmuramoyl-pentapeptide-transferase.